The following is a 297-amino-acid chain: tRNA pseudouridine synthase B (297 aa).

Residue aspartate 44 is the Nucleophile of the active site.

This sequence belongs to the pseudouridine synthase TruB family. Type 1 subfamily.

It carries out the reaction uridine(55) in tRNA = pseudouridine(55) in tRNA. Responsible for synthesis of pseudouridine from uracil-55 in the psi GC loop of transfer RNAs. The protein is tRNA pseudouridine synthase B of Corynebacterium efficiens (strain DSM 44549 / YS-314 / AJ 12310 / JCM 11189 / NBRC 100395).